The following is a 530-amino-acid chain: Phosphoenolpyruvate carboxykinase (ATP) (530 aa).

Substrate is bound by residues arginine 58, tyrosine 195, and lysine 201. Residues lysine 201, histidine 220, and 236–244 each bind ATP; that span reads GLSGTGKTT. The Mn(2+) site is built by lysine 201 and histidine 220. Residue aspartate 257 participates in Mn(2+) binding. ATP-binding positions include glutamate 285, arginine 321, 440–441, and threonine 446; that span reads RI. Residue arginine 321 participates in substrate binding.

The protein belongs to the phosphoenolpyruvate carboxykinase (ATP) family. Mn(2+) serves as cofactor.

It is found in the cytoplasm. The catalysed reaction is oxaloacetate + ATP = phosphoenolpyruvate + ADP + CO2. Its pathway is carbohydrate biosynthesis; gluconeogenesis. Involved in the gluconeogenesis. Catalyzes the conversion of oxaloacetate (OAA) to phosphoenolpyruvate (PEP) through direct phosphoryl transfer between the nucleoside triphosphate and OAA. The protein is Phosphoenolpyruvate carboxykinase (ATP) of Staphylococcus epidermidis (strain ATCC 12228 / FDA PCI 1200).